We begin with the raw amino-acid sequence, 273 residues long: Tryptase-2 (273 aa).

Positions 1-18 (MLHLLALALLLSLVSAAP) are cleaved as a signal peptide. A propeptide spans 19 to 28 (APGQALQRSG) (activation peptide). In terms of domain architecture, Peptidase S1 spans 29–270 (IIGGKEAPGS…YLDWIHQYVP (242 aa)). Residues Cys-57 and Cys-73 are joined by a disulfide bond. Catalysis depends on charge relay system residues His-72 and Asp-119. 3 disulfide bridges follow: Cys-153/Cys-228, Cys-186/Cys-209, and Cys-218/Cys-246. The active-site Charge relay system is the Ser-222. An N-linked (GlcNAc...) asparagine glycan is attached at Asn-231.

It belongs to the peptidase S1 family. Tryptase subfamily. In terms of assembly, homotetramer.

It is found in the secreted. The catalysed reaction is Preferential cleavage: Arg-|-Xaa, Lys-|-Xaa, but with more restricted specificity than trypsin.. In terms of biological role, tryptase is the major neutral protease present in mast cells and is secreted upon the coupled activation-degranulation response of this cell type. The protein is Tryptase-2 of Ovis aries (Sheep).